Here is a 196-residue protein sequence, read N- to C-terminus: Probable nicotinate-nucleotide adenylyltransferase (196 aa).

It belongs to the NadD family.

It carries out the reaction nicotinate beta-D-ribonucleotide + ATP + H(+) = deamido-NAD(+) + diphosphate. It participates in cofactor biosynthesis; NAD(+) biosynthesis; deamido-NAD(+) from nicotinate D-ribonucleotide: step 1/1. In terms of biological role, catalyzes the reversible adenylation of nicotinate mononucleotide (NaMN) to nicotinic acid adenine dinucleotide (NaAD). The protein is Probable nicotinate-nucleotide adenylyltransferase of Thermotoga sp. (strain RQ2).